The primary structure comprises 650 residues: Acetyl-coenzyme A synthetase (650 aa).

CoA-binding positions include 191 to 194 (RGGR), T311, and N335. Residues 387-389 (GEP), 411-416 (DTWWQT), D500, and R515 each bind ATP. S523 lines the CoA pocket. R526 contacts ATP. Residues V537, H539, and V542 each contribute to the Mg(2+) site. Residue R584 coordinates CoA. N6-acetyllysine is present on K609.

Belongs to the ATP-dependent AMP-binding enzyme family. The cofactor is Mg(2+). In terms of processing, acetylated. Deacetylation by the SIR2-homolog deacetylase activates the enzyme.

It carries out the reaction acetate + ATP + CoA = acetyl-CoA + AMP + diphosphate. Functionally, catalyzes the conversion of acetate into acetyl-CoA (AcCoA), an essential intermediate at the junction of anabolic and catabolic pathways. AcsA undergoes a two-step reaction. In the first half reaction, AcsA combines acetate with ATP to form acetyl-adenylate (AcAMP) intermediate. In the second half reaction, it can then transfer the acetyl group from AcAMP to the sulfhydryl group of CoA, forming the product AcCoA. The chain is Acetyl-coenzyme A synthetase from Shewanella amazonensis (strain ATCC BAA-1098 / SB2B).